We begin with the raw amino-acid sequence, 253 residues long: Imidazole glycerol phosphate synthase subunit HisF (253 aa).

Active-site residues include Asp11 and Asp130.

The protein belongs to the HisA/HisF family. As to quaternary structure, heterodimer of HisH and HisF.

It localises to the cytoplasm. The enzyme catalyses 5-[(5-phospho-1-deoxy-D-ribulos-1-ylimino)methylamino]-1-(5-phospho-beta-D-ribosyl)imidazole-4-carboxamide + L-glutamine = D-erythro-1-(imidazol-4-yl)glycerol 3-phosphate + 5-amino-1-(5-phospho-beta-D-ribosyl)imidazole-4-carboxamide + L-glutamate + H(+). It functions in the pathway amino-acid biosynthesis; L-histidine biosynthesis; L-histidine from 5-phospho-alpha-D-ribose 1-diphosphate: step 5/9. Its function is as follows. IGPS catalyzes the conversion of PRFAR and glutamine to IGP, AICAR and glutamate. The HisF subunit catalyzes the cyclization activity that produces IGP and AICAR from PRFAR using the ammonia provided by the HisH subunit. In Acidobacterium capsulatum (strain ATCC 51196 / DSM 11244 / BCRC 80197 / JCM 7670 / NBRC 15755 / NCIMB 13165 / 161), this protein is Imidazole glycerol phosphate synthase subunit HisF.